The primary structure comprises 273 residues: 4-hydroxy-tetrahydrodipicolinate reductase (273 aa).

NAD(+)-binding positions include 12–17 (GAGGRM) and Glu38. Arg39 contributes to the NADP(+) binding site. NAD(+)-binding positions include 102-104 (GTT) and 126-129 (AANF). The Proton donor/acceptor role is filled by His159. His160 serves as a coordination point for (S)-2,3,4,5-tetrahydrodipicolinate. The active-site Proton donor is the Lys163. 169 to 170 (GT) is a (S)-2,3,4,5-tetrahydrodipicolinate binding site.

Belongs to the DapB family. As to quaternary structure, homotetramer.

It is found in the cytoplasm. It catalyses the reaction (S)-2,3,4,5-tetrahydrodipicolinate + NAD(+) + H2O = (2S,4S)-4-hydroxy-2,3,4,5-tetrahydrodipicolinate + NADH + H(+). It carries out the reaction (S)-2,3,4,5-tetrahydrodipicolinate + NADP(+) + H2O = (2S,4S)-4-hydroxy-2,3,4,5-tetrahydrodipicolinate + NADPH + H(+). Its pathway is amino-acid biosynthesis; L-lysine biosynthesis via DAP pathway; (S)-tetrahydrodipicolinate from L-aspartate: step 4/4. Its function is as follows. Catalyzes the conversion of 4-hydroxy-tetrahydrodipicolinate (HTPA) to tetrahydrodipicolinate. The protein is 4-hydroxy-tetrahydrodipicolinate reductase of Shigella boydii serotype 4 (strain Sb227).